The following is a 295-amino-acid chain: Sulfotransferase 1A1 (295 aa).

Residue 48–53 (KSGTTW) coordinates 3'-phosphoadenylyl sulfate. A substrate-binding site is contributed by 106 to 108 (KTH). H108 (proton acceptor) is an active-site residue. 3'-phosphoadenylyl sulfate-binding positions include R130, S138, Y193, 227–232 (TSFKEM), and 255–259 (FMRKG). Phosphoserine is present on S138.

Belongs to the sulfotransferase 1 family. As to quaternary structure, homodimer. In terms of tissue distribution, ubiquitously expressed in canine tissues with highest expression in male and female liver.

The protein localises to the cytoplasm. The enzyme catalyses a phenol + 3'-phosphoadenylyl sulfate = an aryl sulfate + adenosine 3',5'-bisphosphate + H(+). It carries out the reaction 17beta-estradiol + 3'-phosphoadenylyl sulfate = 17beta-estradiol 3-sulfate + adenosine 3',5'-bisphosphate + H(+). It catalyses the reaction 4-ethylphenol + 3'-phosphoadenylyl sulfate = 4-ethylphenyl sulfate + adenosine 3',5'-bisphosphate + H(+). The catalysed reaction is 4-nitrophenol + 3'-phosphoadenylyl sulfate = 4-nitrophenyl sulfate + adenosine 3',5'-bisphosphate. The enzyme catalyses dopamine + 3'-phosphoadenylyl sulfate = dopamine 3-O-sulfate + adenosine 3',5'-bisphosphate + H(+). It carries out the reaction dopamine + 3'-phosphoadenylyl sulfate = dopamine 4-O-sulfate + adenosine 3',5'-bisphosphate + H(+). It catalyses the reaction 3,3',5-triiodo-L-thyronine + 3'-phosphoadenylyl sulfate = 3,3',5-triiodo-L-thyronine sulfate + adenosine 3',5'-bisphosphate + H(+). The catalysed reaction is 3,3',5'-triiodo-L-thyronine + 3'-phosphoadenylyl sulfate = 3,3',5'-triiodo-L-thyronine sulfate + adenosine 3',5'-bisphosphate + H(+). The enzyme catalyses 3,3'-diiodo-L-thyronine + 3'-phosphoadenylyl sulfate = 3,3'-diiodo-L-thyronine sulfate + adenosine 3',5'-bisphosphate + H(+). It carries out the reaction L-thyroxine + 3'-phosphoadenylyl sulfate = L-thyroxine sulfate + adenosine 3',5'-bisphosphate + H(+). Its function is as follows. Sulfotransferase that utilizes 3'-phospho-5'-adenylyl sulfate (PAPS) as sulfonate donor to catalyze the sulfate conjugation of a wide variety of acceptor molecules bearing a hydroxyl or an amine group. Sulfonation increases the water solubility of most compounds, and therefore their renal excretion, but it can also result in bioactivation to form active metabolites. Displays broad substrate specificity for small phenolic compounds. Plays an important role in the sulfonation of endogenous molecules such as steroid hormones. Mediates also the metabolic activation of carcinogenic N-hydroxyarylamines leading to highly reactive intermediates capable of forming DNA adducts, potentially resulting in mutagenesis. May play a role in gut microbiota-host metabolic interaction. O-sulfonates 4-ethylphenol (4-EP), a dietary tyrosine-derived metabolite produced by gut bacteria. The product 4-EPS crosses the blood-brain barrier and may negatively regulate oligodendrocyte maturation and myelination, affecting the functional connectivity of different brain regions associated with the limbic system. Catalyzes the sulfate conjugation of dopamine. Catalyzes the sulfation of T4 (L-thyroxine/3,5,3',5'-tetraiodothyronine), T3 (3,5,3'-triiodothyronine), rT3 (3,3',5'-triiodothyronine) and 3,3'-T2 (3,3'-diiodothyronine), with a substrate preference of 3,3'-T2 &gt; rT3 &gt; T3 &gt; T4. In Canis lupus familiaris (Dog), this protein is Sulfotransferase 1A1 (SULT1A1).